Reading from the N-terminus, the 255-residue chain is Zinc import ATP-binding protein ZnuC 1 (255 aa).

In terms of domain architecture, ABC transporter spans 7–220 (IRLQDVTVKI…PAFINLFGTQ (214 aa)). 39–46 (GPNGAGKS) serves as a coordination point for ATP. The interval 229–255 (HHHHDHHHHTDGTVAAGSECSHGDQHA) is disordered.

This sequence belongs to the ABC transporter superfamily. Zinc importer (TC 3.A.1.15.5) family. As to quaternary structure, the complex is composed of two ATP-binding proteins (ZnuC), two transmembrane proteins (ZnuB) and a solute-binding protein (ZnuA).

The protein resides in the cell inner membrane. It carries out the reaction Zn(2+)(out) + ATP(in) + H2O(in) = Zn(2+)(in) + ADP(in) + phosphate(in) + H(+)(in). Part of the ABC transporter complex ZnuABC involved in zinc import. Responsible for energy coupling to the transport system. The sequence is that of Zinc import ATP-binding protein ZnuC 1 from Hahella chejuensis (strain KCTC 2396).